A 410-amino-acid polypeptide reads, in one-letter code: Peptidase T (410 aa).

Zn(2+) is bound at residue His79. Asp81 is an active-site residue. Asp142 contacts Zn(2+). Glu176 serves as the catalytic Proton acceptor. The Zn(2+) site is built by Glu177, Asp199, and His381.

It belongs to the peptidase M20B family. The cofactor is Zn(2+).

It localises to the cytoplasm. It catalyses the reaction Release of the N-terminal residue from a tripeptide.. Functionally, cleaves the N-terminal amino acid of tripeptides. This is Peptidase T from Bacillus thuringiensis (strain Al Hakam).